Reading from the N-terminus, the 265-residue chain is Endochitinase At2g43580 (265 aa).

The N-terminal stretch at 1–24 is a signal peptide; sequence MALTKIFLILLLSLLGLYSETVKS. In terms of domain architecture, Chitin-binding type-1 spans 25-59; it reads QNCDCAPNLCCSQFGYCGTTADYCGSTCQSGPCRV. 4 disulfide bridges follow: Cys-27–Cys-35, Cys-29–Cys-41, Cys-34–Cys-48, and Cys-52–Cys-57. The catalytic stretch occupies residues 67–265; sequence GLVGNIVTQI…GLDPGANITC (199 aa). Asn-102 carries an N-linked (GlcNAc...) asparagine glycan. Glu-129 (proton donor) is an active-site residue. N-linked (GlcNAc...) asparagine glycosylation is present at Asn-262.

The protein belongs to the glycosyl hydrolase 19 family. Chitinase class I subfamily.

The catalysed reaction is Random endo-hydrolysis of N-acetyl-beta-D-glucosaminide (1-&gt;4)-beta-linkages in chitin and chitodextrins.. The polypeptide is Endochitinase At2g43580 (Arabidopsis thaliana (Mouse-ear cress)).